We begin with the raw amino-acid sequence, 218 residues long: YlmG homolog protein 1-2, chloroplastic (218 aa).

The N-terminal 83 residues, 1–83 (MASFTTNSLA…TRSITTLVLL (83 aa)), are a transit peptide targeting the chloroplast. 2 consecutive transmembrane segments (helical) span residues 133–153 (LTVV…VLMV) and 187–207 (IIPP…AVLG).

Belongs to the YggT family.

It localises to the plastid. The protein localises to the chloroplast thylakoid membrane. Functionally, not required for the biogenesis and accumulation of native cytochrome b6 in the thylakoid membrane. Not functionally involved in the pathway for covalent binding of the c-type heme to cytochrome b6. In Arabidopsis thaliana (Mouse-ear cress), this protein is YlmG homolog protein 1-2, chloroplastic.